The chain runs to 287 residues: Ethanolamine ammonia-lyase small subunit (287 aa).

Residues V168, E189, and C218 each contribute to the adenosylcob(III)alamin site.

The protein belongs to the EutC family. As to quaternary structure, the basic unit is a heterodimer which dimerizes to form tetramers. The heterotetramers trimerize; 6 large subunits form a core ring with 6 small subunits projecting outwards. Adenosylcob(III)alamin serves as cofactor.

It localises to the bacterial microcompartment. It carries out the reaction ethanolamine = acetaldehyde + NH4(+). It functions in the pathway amine and polyamine degradation; ethanolamine degradation. Catalyzes the deamination of various vicinal amino-alcohols to oxo compounds. Allows this organism to utilize ethanolamine as the sole source of nitrogen and carbon in the presence of external vitamin B12. This Pseudomonas syringae pv. tomato (strain ATCC BAA-871 / DC3000) protein is Ethanolamine ammonia-lyase small subunit.